The sequence spans 73 residues: Toxin Td7 (73 aa).

Residues 1–7 (IGMAVEC) form the signal peptide. Residues 8 to 70 (KDGYLVGADG…VWDSATNRCG (63 aa)) form the LCN-type CS-alpha/beta domain. 4 cysteine pairs are disulfide-bonded: Cys18-Cys69, Cys22-Cys44, Cys30-Cys50, and Cys34-Cys52. Lys71 is subject to Lysine amide.

This sequence belongs to the long (4 C-C) scorpion toxin superfamily. Sodium channel inhibitor family. Beta subfamily. Expressed by the venom gland.

The protein resides in the secreted. Beta toxins bind voltage-independently at site-4 of sodium channels (Nav) and shift the voltage of activation toward more negative potentials thereby affecting sodium channel activation and promoting spontaneous and repetitive firing. The protein is Toxin Td7 of Tityus discrepans (Venezuelan scorpion).